A 397-amino-acid chain; its full sequence is Tryptophan synthase beta chain (397 aa).

An N6-(pyridoxal phosphate)lysine modification is found at lysine 87.

Belongs to the TrpB family. In terms of assembly, tetramer of two alpha and two beta chains. Pyridoxal 5'-phosphate serves as cofactor.

The enzyme catalyses (1S,2R)-1-C-(indol-3-yl)glycerol 3-phosphate + L-serine = D-glyceraldehyde 3-phosphate + L-tryptophan + H2O. The protein operates within amino-acid biosynthesis; L-tryptophan biosynthesis; L-tryptophan from chorismate: step 5/5. Functionally, the beta subunit is responsible for the synthesis of L-tryptophan from indole and L-serine. The protein is Tryptophan synthase beta chain of Klebsiella pneumoniae (strain 342).